Here is a 240-residue protein sequence, read N- to C-terminus: Ribonuclease PH (240 aa).

Phosphate contacts are provided by residues Arg87 and 125 to 127; that span reads GTR.

It belongs to the RNase PH family. Homohexameric ring arranged as a trimer of dimers.

It carries out the reaction tRNA(n+1) + phosphate = tRNA(n) + a ribonucleoside 5'-diphosphate. Its function is as follows. Phosphorolytic 3'-5' exoribonuclease that plays an important role in tRNA 3'-end maturation. Removes nucleotide residues following the 3'-CCA terminus of tRNAs; can also add nucleotides to the ends of RNA molecules by using nucleoside diphosphates as substrates, but this may not be physiologically important. Probably plays a role in initiation of 16S rRNA degradation (leading to ribosome degradation) during starvation. In Ruminiclostridium cellulolyticum (strain ATCC 35319 / DSM 5812 / JCM 6584 / H10) (Clostridium cellulolyticum), this protein is Ribonuclease PH.